Consider the following 394-residue polypeptide: HORMA domain-containing protein 1 (394 aa).

The 203-residue stretch at 24-226 folds into the HORMA domain; it reads HQSLVLVKRL…TPFHIFKVKV (203 aa). A disordered region spans residues 252–394; it reads KILRDKDVED…RKFSEPKEHI (143 aa). Basic and acidic residues predominate over residues 253-282; the sequence is ILRDKDVEDEQEHYTSDDLDMETKMEEQEK. 2 stretches are compositionally biased toward polar residues: residues 310-324 and 343-352; these read LSIS…VNKT and KMANGNQPVK. Over residues 362 to 374 the composition is skewed to basic and acidic residues; that stretch reads QHESGRRVLHHFD. A Phosphoserine modification is found at serine 376. Positions 383-386 match the Nuclear localization signal motif; it reads KRRK.

In terms of assembly, interacts with HORMAD2. Interacts with IHO1. Post-translationally, phosphorylated at Ser-377 in a SPO11-dependent manner.

It localises to the nucleus. Its subcellular location is the chromosome. Its function is as follows. Plays a key role in meiotic progression. Regulates 3 different functions during meiosis: ensures that sufficient numbers of processed DNA double-strand breaks (DSBs) are available for successful homology search by increasing the steady-state numbers of single-stranded DSB ends. Promotes synaptonemal-complex formation independently of its role in homology search. Plays a key role in the male mid-pachytene checkpoint and the female meiotic prophase checkpoint: required for efficient build-up of ATR activity on unsynapsed chromosome regions, a process believed to form the basis of meiotic silencing of unsynapsed chromatin (MSUC) and meiotic prophase quality control in both sexes. The polypeptide is HORMA domain-containing protein 1 (HORMAD1) (Macaca fascicularis (Crab-eating macaque)).